A 267-amino-acid polypeptide reads, in one-letter code: Hydroxyethylthiazole kinase (267 aa).

Position 46 (M46) interacts with substrate. R121 and T167 together coordinate ATP. A194 serves as a coordination point for substrate.

It belongs to the Thz kinase family. It depends on Mg(2+) as a cofactor.

It catalyses the reaction 5-(2-hydroxyethyl)-4-methylthiazole + ATP = 4-methyl-5-(2-phosphooxyethyl)-thiazole + ADP + H(+). The protein operates within cofactor biosynthesis; thiamine diphosphate biosynthesis; 4-methyl-5-(2-phosphoethyl)-thiazole from 5-(2-hydroxyethyl)-4-methylthiazole: step 1/1. Functionally, catalyzes the phosphorylation of the hydroxyl group of 4-methyl-5-beta-hydroxyethylthiazole (THZ). This Rhizobium johnstonii (strain DSM 114642 / LMG 32736 / 3841) (Rhizobium leguminosarum bv. viciae) protein is Hydroxyethylthiazole kinase.